We begin with the raw amino-acid sequence, 567 residues long: Beta-galactoside-specific lectin 2 (567 aa).

A signal peptide spans 1 to 33 (MNARLASSRAWVWCFLMVGLVCGATAKAESKIN). Asn-145 is a glycosylation site (N-linked (GlcNAc...) asparagine). Residue Glu-198 is part of the active site. Intrachain disulfides connect Cys-280/Cys-306 and Cys-322/Cys-341. Positions 288–301 (DVHNWPLVIRPVMV) are cleaved as a propeptide — connecting peptide. The Ricin B-type lectin 1 domain occupies 309-439 (SEPTVRIVGR…DSLGQSWLAS (131 aa)). 324–326 (DVR) contributes to the D-galactose binding site. The N-linked (GlcNAc...) asparagine glycan is linked to Asn-362. An intrachain disulfide couples Cys-365 to Cys-382. A glycan (N-linked (GlcNAc...) asparagine) is linked at Asn-440. The 124-residue stretch at 443 to 566 (APREVTIYGF…GNPNQMWLPV (124 aa)) folds into the Ricin B-type lectin 2 domain. Disulfide bonds link Cys-456–Cys-469 and Cys-495–Cys-512. 539-541 (DVR) contacts D-galactose.

Belongs to the ribosome-inactivating protein family. Type 2 RIP subfamily. In terms of assembly, disulfide-linked dimer of A and B chains.

The catalysed reaction is Endohydrolysis of the N-glycosidic bond at one specific adenosine on the 28S rRNA.. Its function is as follows. The A chain is responsible for inhibiting protein synthesis through the catalytic inactivation of 60S ribosomal subunits by removing adenine from position 4,324 of 28S rRNA. The B chain binds to cell receptors and probably facilitates the entry into the cell of the A chain; B chains are also responsible for cell agglutination (lectin activity). The polypeptide is Beta-galactoside-specific lectin 2 (Viscum album (European mistletoe)).